The primary structure comprises 1274 residues: Mediator of RNA polymerase II transcription subunit 14 (1274 aa).

3 disordered regions span residues 1–40, 1056–1142, and 1155–1274; these read MENG…KAHA, LVGT…LHTQ, and AQRQ…VVID. The span at 27–37 shows a compositional bias: basic and acidic residues; it reads AKREGSPDKGK. The span at 1075-1085 shows a compositional bias: polar residues; that stretch reads QDLQQGPQKTP. Low complexity predominate over residues 1090–1104; that stretch reads AAQAAQAAQAAQAAQ. The segment covering 1108–1119 has biased composition (pro residues); that stretch reads PQRPKQQPPTPS. 3 stretches are compositionally biased toward low complexity: residues 1120-1142, 1155-1172, and 1183-1252; these read QPQQ…LHTQ, AQRQ…NNNT, and PQQR…PQGQ. Positions 1253 to 1265 are enriched in gly residues; that stretch reads PGHGGGANGGMGG.

Belongs to the Mediator complex subunit 14 family. As to quaternary structure, component of the Mediator complex.

The protein resides in the nucleus. Functionally, component of the Mediator complex, a coactivator involved in the regulated transcription of nearly all RNA polymerase II-dependent genes. Mediator functions as a bridge to convey information from gene-specific regulatory proteins to the basal RNA polymerase II transcription machinery. Mediator is recruited to promoters by direct interactions with regulatory proteins and serves as a scaffold for the assembly of a functional preinitiation complex with RNA polymerase II and the general transcription factors. This is Mediator of RNA polymerase II transcription subunit 14 (rgr1) from Neurospora crassa (strain ATCC 24698 / 74-OR23-1A / CBS 708.71 / DSM 1257 / FGSC 987).